The primary structure comprises 177 residues: uncharacterized protein (177 aa).

It belongs to the flavoredoxin family. FMN is required as a cofactor.

This is an uncharacterized protein from Archaeoglobus fulgidus (strain ATCC 49558 / DSM 4304 / JCM 9628 / NBRC 100126 / VC-16).